A 289-amino-acid chain; its full sequence is Early E1A protein (289 aa).

Residues 41–49 are interaction with RB1 in competition with E2F1; it reads PTLHELYDL. Residues 76-140 are interaction with UBE2I; that stretch reads EGIDLLTFPP…PSDDEDEEGE (65 aa). A disordered region spans residues 82 to 107; sequence TFPPAPGSPEPPHLSRQPEQPEQRAL. Pro residues predominate over residues 84–93; that stretch reads PPAPGSPEPP. Position 89 is a phosphoserine; by host (Ser89). Positions 113–117 match the PXLXP motif, interaction with host ZMYND11 motif; it reads PNLVP. The LXCXE motif, interaction with host RB1 and TMEM173/STING motif lies at 122–126; the sequence is LTCHE. A zinc finger lies at 154–174; sequence CRSCHYHRRNTGDPDIMCSLC. Residues 187–245 are disordered; sequence VSEPEPEPEPEPEPARPTRRPKLVPAILRRPTSPVSRECNSSTDSCDSGPSNTPPEIHP. Phosphoserine; by host occurs at positions 219 and 231. Residues 219-237 are compositionally biased toward polar residues; sequence SPVSRECNSSTDSCDSGPS. Residues 258–289 carry the Bipartite nuclear localization signal motif; sequence RVGGRRQAVECIEDLLNESGQPLDLSCKRPRP. Residues 279 to 283 carry the PXDLS motif, CTBP-binding motif; it reads PLDLS.

Belongs to the adenoviridae E1A protein family. In terms of assembly, interacts with host UBE2I; this interaction interferes with polySUMOylation. Interacts with host RB1; this interaction induces the aberrant dissociation of RB1-E2F1 complex thereby disrupting the activity of RB1 and activating E2F1-regulated genes. Interacts with host ATF7; the interaction enhances ATF7-mediated viral transactivation activity which requires the zinc binding domains of both proteins. Isoform early E1A 32 kDa protein and isoform early E1A 26 kDa protein interact (via N-terminus) with CUL1 and E3 ubiquitin ligase RBX1; these interactions inhibit RBX1-CUL1-dependent elongation reaction of ubiquitin chains and attenuate ubiquitination of SCF(FBXW7) target proteins. Interacts (via PXLXP motif) with host ZMYND11/BS69 (via MYND-type zinc finger); this interaction inhibits E1A mediated transactivation. Interacts with host EP300; this interaction stimulates the acetylation of RB1 by recruiting EP300 and RB1 into a multimeric-protein complex. Interacts with host CTBP1 and CTBP2; this interaction seems to potentiate viral replication. Interacts with host DCAF7. Interacts with host DYRK1A. Interacts with host KPNA4; this interaction allows E1A import into the host nucleus. Interacts with host EP400; this interaction stabilizes MYC. Interacts (via LXCXE motif) with host TMEM173/STING; this interaction impairs the ability of TMEM173/STING to sense cytosolic DNA and promote the production of type I interferon (IFN-alpha and IFN-beta). Interacts (via C-terminus) with host ZBED1/hDREF (via C-terminus); the interaction is direct.

The protein resides in the host nucleus. Plays a role in viral genome replication by driving entry of quiescent cells into the cell cycle. Stimulation of progression from G1 to S phase allows the virus to efficiently use the cellular DNA replicating machinery to achieve viral genome replication. E1A protein has both transforming and trans-activating activities. Induces the disassembly of the E2F1 transcription factor from RB1 by direct competition for the same binding site on RB1, with subsequent transcriptional activation of E2F1-regulated S-phase genes and of the E2 region of the adenoviral genome. Release of E2F1 leads to the ARF-mediated inhibition of MDM2 and causes TP53/p53 to accumulate because it is not targeted for degradation by MDM2-mediated ubiquitination anymore. This increase in TP53, in turn, would arrest the cell proliferation and direct its death but this effect is counteracted by the viral protein E1B-55K. Inactivation of the ability of RB1 to arrest the cell cycle is critical for cellular transformation, uncontrolled cellular growth and proliferation induced by viral infection. Interaction with RBX1 and CUL1 inhibits ubiquitination of the proteins targeted by SCF(FBXW7) ubiquitin ligase complex, and may be linked to unregulated host cell proliferation. The tumorigenesis-restraining activity of E1A may be related to the disruption of the host CtBP-CtIP complex through the CtBP binding motif. Interacts with host TBP protein; this interaction probably disrupts the TBP-TATA complex. Interaction with host TMEM173/STING impairs the ability of TMEM173/STING to sense cytosolic DNA and promote the production of type I interferon (IFN-alpha and IFN-beta). Promotes the sumoylation of host ZBED1/hDREF with SUMO1. This Homo sapiens (Human) protein is Early E1A protein.